A 759-amino-acid chain; its full sequence is Zinc finger protein 287 (759 aa).

Positions 42 to 124 (RRNFRNFPYP…ALVEDLTQIL (83 aa)) constitute an SCAN box domain. The tract at residues 127–154 (EEAPQSSALPQDTPEDDPNHDPNPASQA) is disordered. The KRAB domain occupies 166–234 (VTFNDVAVDI…IKEIVEGPNP (69 aa)). 14 consecutive C2H2-type zinc fingers follow at residues 366-388 (YSCN…RENH), 394-416 (YECE…QRMH), 422-444 (YECH…QRIH), 450-472 (YKCE…QRTH), 478-500 (YKCL…QRVH), 506-528 (YICN…QKIH), 534-556 (YKCN…QRIH), 562-584 (YKCT…QTTH), 590-612 (YICN…HRTH), 618-640 (YKCS…QRIH), 646-668 (FKCN…QRVH), 674-696 (YKCH…RRTH), 702-724 (YKCS…QRIH), and 730-752 (YGCR…QRVH).

This sequence belongs to the krueppel C2H2-type zinc-finger protein family. As to expression, expressed in brain and at low levels in kidney and spleen and few hematopoietic cell lines.

The protein localises to the nucleus. Its function is as follows. May be involved in transcriptional regulation. The protein is Zinc finger protein 287 of Mus musculus (Mouse).